Here is a 497-residue protein sequence, read N- to C-terminus: Carboxylesterase (497 aa).

Ser185 functions as the Acyl-ester intermediate in the catalytic mechanism. Residues Glu319 and His415 each act as charge relay system in the active site.

This sequence belongs to the type-B carboxylesterase/lipase family.

The protein localises to the secreted. It carries out the reaction a carboxylic ester + H2O = an alcohol + a carboxylate + H(+). This chain is Carboxylesterase, found in Thermobifida fusca (strain YX).